Reading from the N-terminus, the 404-residue chain is Phosphoribulokinase, chloroplastic (404 aa).

A chloroplast-targeting transit peptide spans 1–53 (MAFCSPHTTTSLRSPCTTIPNSGFRQNQVIFFTTRSSRRSNTRHGARTFQVSC). Cysteines 69 and 108 form a disulfide.

The protein belongs to the phosphoribulokinase family.

Its subcellular location is the plastid. The protein resides in the chloroplast. It catalyses the reaction D-ribulose 5-phosphate + ATP = D-ribulose 1,5-bisphosphate + ADP + H(+). Its pathway is carbohydrate biosynthesis; Calvin cycle. Its activity is regulated as follows. Light regulated via thioredoxin by reversible oxidation/reduction of sulfhydryl/disulfide groups. In Triticum aestivum (Wheat), this protein is Phosphoribulokinase, chloroplastic.